A 699-amino-acid polypeptide reads, in one-letter code: eEF1A lysine and N-terminal methyltransferase (699 aa).

M1 carries the N-acetylmethionine modification. Position 267 is a phosphoserine (S267). The disordered stretch occupies residues 433–459; the sequence is VSHKAQKKRKKDRKKQRPADAEDLPAA. Residues 436-448 are compositionally biased toward basic residues; that stretch reads KAQKKRKKDRKKQ.

This sequence belongs to the methyltransferase superfamily. As to quaternary structure, forms a tripartite complex containing GAB1, METTL13 and SPRY2. Within the complex interacts with GAB1 and SPRY2.

It is found in the cytoplasm. It localises to the nucleus. The protein localises to the mitochondrion. It carries out the reaction L-lysyl-[protein] + S-adenosyl-L-methionine = N(6)-methyl-L-lysyl-[protein] + S-adenosyl-L-homocysteine + H(+). The catalysed reaction is N(6)-methyl-L-lysyl-[protein] + S-adenosyl-L-methionine = N(6),N(6)-dimethyl-L-lysyl-[protein] + S-adenosyl-L-homocysteine + H(+). The enzyme catalyses N-terminal glycyl-L-lysyl-L-glutamyl-[protein] + 3 S-adenosyl-L-methionine = N-terminal N,N,N-trimethyl-glycyl-L-lysyl-L-glutamyl-[protein] + 3 S-adenosyl-L-homocysteine + 3 H(+). Its activity is regulated as follows. Protein N-terminal methyltransferase activity is inhibited by GTP and GDP. Its function is as follows. Dual methyltransferase that catalyzes methylation of elongation factor 1-alpha (EEF1A1 and EEF1A2) at two different positions, and is therefore involved in the regulation of mRNA translation. Via its C-terminus, methylates EEF1A1 and EEF1A2 at the N-terminal residue 'Gly-2'. Via its N-terminus dimethylates EEF1A1 and EEF1A2 at residue 'Lys-55'. Has no activity towards core histones H2A, H2B, H3 and H4. This is eEF1A lysine and N-terminal methyltransferase from Homo sapiens (Human).